The sequence spans 235 residues: Glucosamine-6-phosphate deaminase (235 aa).

Aspartate 62 acts as the Proton acceptor; for enolization step in catalysis. Asparagine 128 acts as the For ring-opening step in catalysis. Catalysis depends on histidine 130, which acts as the Proton acceptor; for ring-opening step. Glutamate 135 acts as the For ring-opening step in catalysis.

This sequence belongs to the glucosamine/galactosamine-6-phosphate isomerase family. NagB subfamily.

It catalyses the reaction alpha-D-glucosamine 6-phosphate + H2O = beta-D-fructose 6-phosphate + NH4(+). It participates in amino-sugar metabolism; N-acetylneuraminate degradation; D-fructose 6-phosphate from N-acetylneuraminate: step 5/5. Functionally, catalyzes the reversible isomerization-deamination of glucosamine 6-phosphate (GlcN6P) to form fructose 6-phosphate (Fru6P) and ammonium ion. This Lactococcus lactis subsp. lactis (strain IL1403) (Streptococcus lactis) protein is Glucosamine-6-phosphate deaminase.